Reading from the N-terminus, the 71-residue chain is Pro-MCH (71 aa).

Positions 1–20 (AKMSLSSYILILTLVLFSQG) are cleaved as a signal peptide.

The protein belongs to the melanin-concentrating hormone family.

It localises to the secreted. This chain is Pro-MCH (PMCH), found in Carlito syrichta (Philippine tarsier).